Here is a 308-residue protein sequence, read N- to C-terminus: 4-hydroxyproline 2-epimerase (308 aa).

C88 (proton acceptor) is an active-site residue. Substrate contacts are provided by residues 89–90, H208, and D232; that span reads GH. The active-site Proton donor is C236. 237 to 238 is a binding site for substrate; sequence GT.

It belongs to the proline racemase family.

The catalysed reaction is trans-4-hydroxy-L-proline = cis-4-hydroxy-D-proline. Catalyzes the epimerization of trans-4-hydroxy-L-proline (t4LHyp) to cis-4-hydroxy-D-proline (c4DHyp). Is likely involved in a degradation pathway that converts t4LHyp to alpha-ketoglutarate. Can also catalyze the epimerization of trans-3-hydroxy-L-proline (t3LHyp) to cis-3-hydroxy-D-proline (c3DHyp), albeit with 200-fold lower efficiency. This is 4-hydroxyproline 2-epimerase from Pseudomonas putida (strain ATCC 700007 / DSM 6899 / JCM 31910 / BCRC 17059 / LMG 24140 / F1).